We begin with the raw amino-acid sequence, 266 residues long: Trehalose-6-phosphate phosphatase (266 aa).

Catalysis depends on D20, which acts as the Nucleophile. Residues D20, D22, and D198 each coordinate Mg(2+). Residue 20–22 (DLD) coordinates substrate.

It belongs to the trehalose phosphatase family. The cofactor is Mg(2+). Mn(2+) serves as cofactor. Co(2+) is required as a cofactor. Requires Zn(2+) as cofactor.

It catalyses the reaction alpha,alpha-trehalose 6-phosphate + H2O = alpha,alpha-trehalose + phosphate. It participates in glycan biosynthesis; trehalose biosynthesis. Removes the phosphate from trehalose 6-phosphate (Tre6P) to produce free trehalose. Also catalyzes the dephosphorylation of glucose-6-phosphate (Glu6P) and 2-deoxyglucose-6-phosphate (2dGlu6P). This Escherichia coli (strain K12) protein is Trehalose-6-phosphate phosphatase (otsB).